Here is a 53-residue protein sequence, read N- to C-terminus: Ferredoxin B (53 aa).

Residues 1–35 (GIDPNYRSLPVVKEEQGVKIYGTYEPPTKLGIWGT) are N-terminal extension. The residue at position 29 (Lys29) is an N6-methyllysine. The 4Fe-4S ferredoxin-type 1 domain occupies 34-53 (GTIVGVDFDLCIADGSCINA). The [3Fe-4S] cluster site is built by Cys44 and Cys50.

[3Fe-4S] cluster serves as cofactor. [4Fe-4S] cluster is required as a cofactor.

Its function is as follows. Ferredoxins are iron-sulfur proteins that transfer electrons in a wide variety of metabolic reactions. In Sulfuracidifex metallicus (Sulfolobus metallicus), this protein is Ferredoxin B.